A 351-amino-acid polypeptide reads, in one-letter code: Protein Maqu_2141 (351 aa).

The protein belongs to the proline racemase family.

In terms of biological role, displays neither proline racemase activity nor trans-4-hydroxy-L-proline (t4LHyp) epimerase activity nor t3LHyp dehydratase activity. In Marinobacter nauticus (strain ATCC 700491 / DSM 11845 / VT8) (Marinobacter aquaeolei), this protein is Protein Maqu_2141.